The chain runs to 189 residues: DAN domain family member 5 (189 aa).

Residues 1-22 (MLLGQLSTLLCLLSGALPTGSG) form the signal peptide. Residue Asn38 is glycosylated (N-linked (GlcNAc...) asparagine). Intrachain disulfides connect Cys101/Cys148, Cys115/Cys162, Cys125/Cys183, and Cys129/Cys185. Positions 101 to 186 (CKAVPFVQVF…TMLIEGCHCS (86 aa)) constitute a CTCK domain.

It belongs to the DAN family. In terms of tissue distribution, expressed in the retina, in inner segments of photoreceptors, at or close to the outer plexiform layer and in the ganglion cell layer (at protein level).

Its subcellular location is the secreted. In terms of biological role, antagonist of the extracellular signaling protein NODAL, which is required for correct left-right patterning during embryonic development. Antagonist of BMP and TGF-beta signaling. Independently of its role in left-right axis establishment, plays a role during heart development, possibly through the regulation of TGF-beta/Nodal signaling pathway. Displays anti-angiogenic activity by inhibiting endothelial sprouting, migration, and proliferation. Once internalized by endothelial cells, may alter their redox and glycolytic balance. This chain is DAN domain family member 5 (DAND5), found in Homo sapiens (Human).